A 354-amino-acid polypeptide reads, in one-letter code: Sulfate permease CysP (354 aa).

The next 8 membrane-spanning stretches (helical) occupy residues 3–23 (LAAI…GAAA), 40–60 (ALIL…GEVV), 77–97 (IVCI…LLGI), 125–145 (LIIV…TYFV), 164–184 (ILGI…GMNN), 197–217 (VLDV…GALL), 293–313 (VWIV…SLFL), and 320–340 (IFIM…TKAI).

The protein belongs to the inorganic phosphate transporter (PiT) (TC 2.A.20) family.

The protein localises to the cell membrane. In terms of biological role, involved in the import of sulfate. The chain is Sulfate permease CysP (cysP) from Bacillus subtilis (strain 168).